We begin with the raw amino-acid sequence, 372 residues long: Glutamate 5-kinase (372 aa).

K14 is an ATP binding site. 3 residues coordinate substrate: S54, D141, and N153. Position 173–174 (173–174 (TD)) interacts with ATP. The region spanning 280 to 358 (RGHVVIDAGA…GEIETVLGYM (79 aa)) is the PUA domain.

Belongs to the glutamate 5-kinase family.

It localises to the cytoplasm. The enzyme catalyses L-glutamate + ATP = L-glutamyl 5-phosphate + ADP. Its pathway is amino-acid biosynthesis; L-proline biosynthesis; L-glutamate 5-semialdehyde from L-glutamate: step 1/2. Functionally, catalyzes the transfer of a phosphate group to glutamate to form L-glutamate 5-phosphate. The protein is Glutamate 5-kinase of Burkholderia vietnamiensis (strain G4 / LMG 22486) (Burkholderia cepacia (strain R1808)).